A 150-amino-acid chain; its full sequence is Truncated transcription factor CAULIFLOWER A (150 aa).

Residues 1 to 61 form the MADS-box domain; the sequence is MGRGRVEMKR…GKLFEYSSES (61 aa). A K-box; partial domain is found at 90–150; the sequence is QTNWSMEYSR…IRSRKNQLMH (61 aa).

Homodimer capable of binding to CArG-box sequences. As to expression, expressed in some of the meristems of arrest-stage cauliflower heads.

Its subcellular location is the nucleus. Probable transcription factor that promotes early floral meristem identity in synergy with APETALA1, FRUITFULL and LEAFY. Is required subsequently for the transition of an inflorescence meristem into a floral meristem. Seems to be partially redundant to the function of APETALA1. In Brassica oleracea var. botrytis (Cauliflower), this protein is Truncated transcription factor CAULIFLOWER A (CAL-A).